Consider the following 275-residue polypeptide: Trans-aconitate 2-methyltransferase (275 aa).

Belongs to the methyltransferase superfamily. Tam family.

Its subcellular location is the cytoplasm. It carries out the reaction trans-aconitate + S-adenosyl-L-methionine = (E)-3-(methoxycarbonyl)pent-2-enedioate + S-adenosyl-L-homocysteine. Its function is as follows. Catalyzes the S-adenosylmethionine monomethyl esterification of trans-aconitate. The polypeptide is Trans-aconitate 2-methyltransferase (Pseudomonas aeruginosa (strain UCBPP-PA14)).